The sequence spans 58 residues: Large ribosomal subunit protein uL30 (58 aa).

The protein belongs to the universal ribosomal protein uL30 family. Part of the 50S ribosomal subunit.

The sequence is that of Large ribosomal subunit protein uL30 from Azotobacter vinelandii (strain DJ / ATCC BAA-1303).